The following is a 510-amino-acid chain: NAD(P)H-quinone oxidoreductase subunit 2 A, chloroplastic (510 aa).

The next 13 helical transmembrane spans lie at 24–44 (LLLF…GLIL), 57–77 (IPWL…ALLF), 99–119 (IFQF…VEYI), 124–144 (MAIT…MFLC), 149–169 (LITI…LSGY), 183–203 (YLLM…WLYG), 229–249 (ISIA…PAPF), 295–315 (WHLL…LIAI), 323–343 (MLAY…IVGD), 354–374 (YMLF…LFGL), 395–415 (ALSS…AGFF), 418–438 (LYLF…IGLL), and 484–504 (MILC…IIAI).

It belongs to the complex I subunit 2 family. As to quaternary structure, NDH is composed of at least 16 different subunits, 5 of which are encoded in the nucleus.

It localises to the plastid. It is found in the chloroplast thylakoid membrane. The enzyme catalyses a plastoquinone + NADH + (n+1) H(+)(in) = a plastoquinol + NAD(+) + n H(+)(out). It catalyses the reaction a plastoquinone + NADPH + (n+1) H(+)(in) = a plastoquinol + NADP(+) + n H(+)(out). In terms of biological role, NDH shuttles electrons from NAD(P)H:plastoquinone, via FMN and iron-sulfur (Fe-S) centers, to quinones in the photosynthetic chain and possibly in a chloroplast respiratory chain. The immediate electron acceptor for the enzyme in this species is believed to be plastoquinone. Couples the redox reaction to proton translocation, and thus conserves the redox energy in a proton gradient. This is NAD(P)H-quinone oxidoreductase subunit 2 A, chloroplastic from Piper cenocladum (Ant piper).